A 162-amino-acid polypeptide reads, in one-letter code: uncharacterized protein (162 aa).

Residues 1–49 (MNSRTASARGWFSSRPPTSESDLEPATDGPASETTTLSPEATTFNDTRI) form a disordered region. The span at 32-46 (SETTTLSPEATTFND) shows a compositional bias: polar residues. The chain crosses the membrane as a helical span at residues 62–82 (MLLSFGIITVIGLAVALVLYI).

Its subcellular location is the membrane. This is an uncharacterized protein from Homo sapiens (Human).